We begin with the raw amino-acid sequence, 332 residues long: tRNA(Ile)-lysidine synthase (332 aa).

Residue 39–44 coordinates ATP; that stretch reads SGGADS.

Belongs to the tRNA(Ile)-lysidine synthase family.

The protein localises to the cytoplasm. The enzyme catalyses cytidine(34) in tRNA(Ile2) + L-lysine + ATP = lysidine(34) in tRNA(Ile2) + AMP + diphosphate + H(+). In terms of biological role, ligates lysine onto the cytidine present at position 34 of the AUA codon-specific tRNA(Ile) that contains the anticodon CAU, in an ATP-dependent manner. Cytidine is converted to lysidine, thus changing the amino acid specificity of the tRNA from methionine to isoleucine. In Leifsonia xyli subsp. xyli (strain CTCB07), this protein is tRNA(Ile)-lysidine synthase.